Reading from the N-terminus, the 861-residue chain is Actin-binding LIM protein 1 (861 aa).

4 LIM zinc-binding domains span residues 97 to 156, 156 to 216, 224 to 283, and 283 to 343; these read IHCH…MYGT, TRCH…MSSS, SNCA…LFGV, and VKCE…TKTE. Ser216 is modified (phosphoserine). Residues 374-414 are disordered; it reads LQLLSPPCLTNSNKNPRQPTRTSSESIYSRPGSSIPGSPGH. Positions 381–400 are enriched in polar residues; the sequence is CLTNSNKNPRQPTRTSSESI. Low complexity predominate over residues 404–413; the sequence is PGSSIPGSPG. Ser411 is subject to Phosphoserine. Residues Tyr417 and Tyr440 each carry the phosphotyrosine modification. Disordered regions lie at residues 459-590 and 634-682; these read EDKQ…PTYA and FPAA…ELLR. Ser466, Ser470, and Ser475 each carry phosphoserine. Over residues 467-478 the composition is skewed to polar residues; sequence LGESPRTLSPTP. Thr477 carries the post-translational modification Phosphothreonine. Position 479 is a phosphoserine (Ser479). A Phosphotyrosine modification is found at Tyr483. Residues 493–518 show a composition bias toward polar residues; that stretch reads RSTSQGSINSPVYSRHSYTPTTSRSP. Phosphoserine occurs at positions 496, 499, and 502. Over residues 536–546 the composition is skewed to low complexity; the sequence is PLRTSSFSSTH. Residues Ser582 and Ser671 each carry the phosphoserine modification. A coiled-coil region spans residues 673–723; sequence REEDEEELLRRRQLQEEQLMKLNSGLGQLILKEEMEKESRERASLASRYDS. Residue Lys704 forms a Glycyl lysine isopeptide (Lys-Gly) (interchain with G-Cter in SUMO2) linkage. The interval 713–748 is disordered; the sequence is ERASLASRYDSPLHSASHAPSSKTSSLPGYGKNGLH. 4 positions are modified to phosphoserine: Ser723, Ser738, Ser760, and Ser789. Positions 724 to 738 are enriched in low complexity; it reads PLHSASHAPSSKTSS. The region spanning 793 to 861 is the HP domain; the sequence is MLEPKIFPYE…NDMKKKAKLF (69 aa).

Binds F-actin. Interacts with ABRA. Isoform 1 is detected in adult retina, where it is highly expressed in the ganglion layer. Detected in rod inner segment. Isoform 2 is highly expressed in adult retina, brain, kidney and heart. Isoform 3 is highly expressed in adult retina, brain, kidney, liver, skeletal muscle, spleen and heart. Detected in embryonic retina, brain, spinal cord, peripheral sensory ganglia and thymus.

The protein resides in the cytoplasm. It is found in the cytoskeleton. In terms of biological role, may act as scaffold protein. May play a role in the development of the retina. Has been suggested to play a role in axon guidance. This Mus musculus (Mouse) protein is Actin-binding LIM protein 1 (Ablim1).